The following is a 252-amino-acid chain: 5-oxoprolinase subunit A (252 aa).

It belongs to the LamB/PxpA family. In terms of assembly, forms a complex composed of PxpA, PxpB and PxpC.

The enzyme catalyses 5-oxo-L-proline + ATP + 2 H2O = L-glutamate + ADP + phosphate + H(+). Functionally, catalyzes the cleavage of 5-oxoproline to form L-glutamate coupled to the hydrolysis of ATP to ADP and inorganic phosphate. In Corynebacterium glutamicum (strain ATCC 13032 / DSM 20300 / JCM 1318 / BCRC 11384 / CCUG 27702 / LMG 3730 / NBRC 12168 / NCIMB 10025 / NRRL B-2784 / 534), this protein is 5-oxoprolinase subunit A.